We begin with the raw amino-acid sequence, 274 residues long: Hydroxyethylthiazole kinase (274 aa).

M50 serves as a coordination point for substrate. Positions 126 and 171 each coordinate ATP. A200 contributes to the substrate binding site.

This sequence belongs to the Thz kinase family. It depends on Mg(2+) as a cofactor.

The catalysed reaction is 5-(2-hydroxyethyl)-4-methylthiazole + ATP = 4-methyl-5-(2-phosphooxyethyl)-thiazole + ADP + H(+). It participates in cofactor biosynthesis; thiamine diphosphate biosynthesis; 4-methyl-5-(2-phosphoethyl)-thiazole from 5-(2-hydroxyethyl)-4-methylthiazole: step 1/1. Its function is as follows. Catalyzes the phosphorylation of the hydroxyl group of 4-methyl-5-beta-hydroxyethylthiazole (THZ). In Acinetobacter baylyi (strain ATCC 33305 / BD413 / ADP1), this protein is Hydroxyethylthiazole kinase.